A 142-amino-acid chain; its full sequence is Hemoglobin anodic subunit alpha (142 aa).

The residue at position 1 (serine 1) is an N-acetylserine. The Globin domain occupies 1 to 142; that stretch reads SLSTKDKAVV…LALALADRYR (142 aa). Histidine 59 contacts O2. Histidine 88 contributes to the heme b binding site.

The protein belongs to the globin family. In terms of assembly, heterotetramer of two alpha chains and two beta chains. In terms of tissue distribution, red blood cells.

Functionally, involved in oxygen transport from gills to the various peripheral tissues. The polypeptide is Hemoglobin anodic subunit alpha (Gymnothorax unicolor (Brown moray)).